The chain runs to 40 residues: Photosystem II reaction center protein J (40 aa).

Residues 8 to 28 (IPLWIIGTVAGILVIGLIGIF) traverse the membrane as a helical segment.

It belongs to the PsbJ family. As to quaternary structure, PSII is composed of 1 copy each of membrane proteins PsbA, PsbB, PsbC, PsbD, PsbE, PsbF, PsbH, PsbI, PsbJ, PsbK, PsbL, PsbM, PsbT, PsbX, PsbY, PsbZ, Psb30/Ycf12, at least 3 peripheral proteins of the oxygen-evolving complex and a large number of cofactors. It forms dimeric complexes.

The protein resides in the plastid. The protein localises to the chloroplast thylakoid membrane. One of the components of the core complex of photosystem II (PSII). PSII is a light-driven water:plastoquinone oxidoreductase that uses light energy to abstract electrons from H(2)O, generating O(2) and a proton gradient subsequently used for ATP formation. It consists of a core antenna complex that captures photons, and an electron transfer chain that converts photonic excitation into a charge separation. This chain is Photosystem II reaction center protein J, found in Nicotiana sylvestris (Wood tobacco).